Consider the following 92-residue polypeptide: Large ribosomal subunit protein eL43 (92 aa).

Residues Cys-39, Cys-42, Cys-57, and Cys-60 each contribute to the Zn(2+) site. The C4-type zinc finger occupies 39–60 (CPNCGEDRVDRQGTGIWQCSYC).

This sequence belongs to the eukaryotic ribosomal protein eL43 family. Putative zinc-binding subfamily. Part of the 50S ribosomal subunit. Contacts protein L2. Zn(2+) serves as cofactor.

Its function is as follows. Binds to the 23S rRNA. The protein is Large ribosomal subunit protein eL43 of Haloarcula marismortui (strain ATCC 43049 / DSM 3752 / JCM 8966 / VKM B-1809) (Halobacterium marismortui).